Reading from the N-terminus, the 471-residue chain is Chitobiosyldiphosphodolichol beta-mannosyltransferase (471 aa).

Topologically, residues 1–31 (MDTSSVTMHTERACCHQAQRAVAAMLDKAPS) are lumenal. Residues 32-52 (WLIWTAVLYVGLPFMLYWAVP) traverse the membrane as a helical segment. Topologically, residues 53-126 (YLFYHNKTKS…ALPGASNAGK (74 aa)) are cytoplasmic. An intramembrane region (helical) is located at residues 127 to 147 (SLGQTARKVVLQTCHIVRQLW). The Cytoplasmic portion of the chain corresponds to 148–471 (ELRGCDYILI…MSELQVVRQS (324 aa)).

Belongs to the glycosyltransferase group 1 family.

It is found in the endoplasmic reticulum membrane. The catalysed reaction is an N,N'-diacetylchitobiosyl-diphospho-di-trans,poly-cis-dolichol + GDP-alpha-D-mannose = a beta-D-Man-(1-&gt;4)-beta-D-GlcNAc-(1-&gt;4)-alpha-D-GlcNAc-diphospho-di-trans,poly-cis-dolichol + GDP + H(+). It functions in the pathway protein modification; protein glycosylation. Its function is as follows. Participates in the formation of the lipid-linked precursor oligosaccharide for N-glycosylation. Involved in assembling the dolichol-pyrophosphate-GlcNAc(2)-Man(5) intermediate on the cytoplasmic surface of the ER. This is Chitobiosyldiphosphodolichol beta-mannosyltransferase (ALG1) from Eremothecium gossypii (strain ATCC 10895 / CBS 109.51 / FGSC 9923 / NRRL Y-1056) (Yeast).